The chain runs to 470 residues: Glutamate--tRNA ligase 2 (470 aa).

A 'HIGH' region motif is present at residues 11 to 21 (PSPTGHLHLGG). Positions 238 to 242 (KLSKR) match the 'KMSKS' region motif. Lys241 contacts ATP.

It belongs to the class-I aminoacyl-tRNA synthetase family. Glutamate--tRNA ligase type 1 subfamily. As to quaternary structure, monomer.

Its subcellular location is the cytoplasm. The enzyme catalyses tRNA(Glu) + L-glutamate + ATP = L-glutamyl-tRNA(Glu) + AMP + diphosphate. Catalyzes the attachment of glutamate to tRNA(Glu) in a two-step reaction: glutamate is first activated by ATP to form Glu-AMP and then transferred to the acceptor end of tRNA(Glu). This Ehrlichia ruminantium (strain Welgevonden) protein is Glutamate--tRNA ligase 2.